A 1141-amino-acid chain; its full sequence is DNA-directed RNA polymerase II subunit RPB2 (1141 aa).

Aspartate 763 provides a ligand contact to Mg(2+). The Zn(2+) site is built by cysteine 1087, cysteine 1090, cysteine 1103, and cysteine 1106. Residues 1087–1106 (CDFCGLLAMGGSKVNECKGC) form a C4-type zinc finger.

This sequence belongs to the RNA polymerase beta chain family. As to quaternary structure, component of the RNA polymerase II (Pol II) complex consisting of 12 subunits.

It is found in the nucleus. It catalyses the reaction RNA(n) + a ribonucleoside 5'-triphosphate = RNA(n+1) + diphosphate. Its function is as follows. DNA-dependent RNA polymerase catalyzes the transcription of DNA into RNA using the four ribonucleoside triphosphates as substrates. Second largest component of RNA polymerase II which synthesizes mRNA precursors and many functional non-coding RNAs. Proposed to contribute to the polymerase catalytic activity and forms the polymerase active center together with the largest subunit. Pol II is the central component of the basal RNA polymerase II transcription machinery. It is composed of mobile elements that move relative to each other. RPB2 is part of the core element with the central large cleft, the clamp element that moves to open and close the cleft and the jaws that are thought to grab the incoming DNA template. The chain is DNA-directed RNA polymerase II subunit RPB2 (RPB2) from Encephalitozoon cuniculi (strain GB-M1) (Microsporidian parasite).